Consider the following 76-residue polypeptide: MYSFVSEETGTLIVNSVLLFFAFVVFLLVTLAILTALRLCAYCCNIVNVSLVKPTVYVYSRVKNLNSSEGVPDLLV.

Residues 1 to 16 (MYSFVSEETGTLIVNS) are Virion surface-facing. The helical transmembrane segment at 17–37 (VLLFFAFVVFLLVTLAILTAL) threads the bilayer. Residues 38-76 (RLCAYCCNIVNVSLVKPTVYVYSRVKNLNSSEGVPDLLV) are Intravirion-facing.

This sequence belongs to the betacoronaviruses E protein family. In terms of assembly, homopentamer. Interacts with membrane protein M in the budding compartment of the host cell, which is located between endoplasmic reticulum and the Golgi complex. Interacts with Nucleoprotein.

The protein localises to the host Golgi apparatus membrane. Its function is as follows. Plays a central role in virus morphogenesis and assembly. Acts as a viroporin and self-assembles in host membranes forming pentameric protein-lipid pores that allow ion transport. Also plays a role in the induction of apoptosis. The chain is Envelope small membrane protein from Rhinolophus macrotis (Big-eared horseshoe bat).